The primary structure comprises 269 residues: Small ribosomal subunit protein eS1 (269 aa).

The segment at 1 to 20 (MAVGKNKGVSKGGKKGSKKK) is disordered.

Belongs to the eukaryotic ribosomal protein eS1 family. Component of the small ribosomal subunit. Mature ribosomes consist of a small (40S) and a large (60S) subunit. The 40S subunit contains about 33 different proteins and 1 molecule of RNA (18S). The 60S subunit contains about 49 different proteins and 3 molecules of RNA (28S, 5.8S and 5S).

Its subcellular location is the cytoplasm. In terms of biological role, has an essential role in oogenesis. This is Small ribosomal subunit protein eS1 from Anopheles gambiae (African malaria mosquito).